The primary structure comprises 573 residues: MTKEIQGIAASSGIAIAKAFRLENPELTVEKKSVTEVEAEVARLEAALEKSKSELEIIREHARKELGDDKAEIFEAHLLVLSDPELINPIKDKITNENVNAEHALDEVAAMFINMFESMDNEYMKERAADIRDVTKRVLAHLLGVNVSNPSLISEEVVIIAEDLTPSDTAQLNRKFVKGFTTDIGGRTSHSAIMARSMEIPAVVGTKTVMEDIQNGVLVIVDGLDGEVIVDPSEETVKAYEKKAAEYAEQKAEWAKLVNEKTVSADDHHVELAANIGTPEDVKGVLENGGEGVGLYRTEFLYMGREDLPTEEEQFTSYKTVLERMEGKPVVVRTLDIGGDKELPYLNLPKEMNPFLGFRAIRLCLEMQDMFRTQLRALLRASVYGNLKIMFPMIATVDEFRQAKAILLEEKAKLQQEGVQVSEDIEVGMMVEIPSSAVIADLFAKEVDFFSIGTNDLIQYTLAADRMNERVSYLYQPYNPAILRLVNMVIKAAHKEGKWVGMCGEMAGDEIAIPILLGLGLDEFSMSATSILKARSQIRQLSKADIEPHLDTILSMSSTEEVIEFVKSTFHIG.

Catalysis depends on His190, which acts as the Tele-phosphohistidine intermediate. Arg297 and Arg333 together coordinate phosphoenolpyruvate. Mg(2+) is bound by residues Glu432 and Asp456. Phosphoenolpyruvate contacts are provided by residues 455–456 (ND) and Arg466. The active-site Proton donor is the Cys503.

It belongs to the PEP-utilizing enzyme family. Homodimer. The cofactor is Mg(2+).

The protein resides in the cytoplasm. The enzyme catalyses L-histidyl-[protein] + phosphoenolpyruvate = N(pros)-phospho-L-histidyl-[protein] + pyruvate. General (non sugar-specific) component of the phosphoenolpyruvate-dependent sugar phosphotransferase system (sugar PTS). This major carbohydrate active-transport system catalyzes the phosphorylation of incoming sugar substrates concomitantly with their translocation across the cell membrane. Enzyme I transfers the phosphoryl group from phosphoenolpyruvate (PEP) to the phosphoryl carrier protein (HPr). The chain is Phosphoenolpyruvate-protein phosphotransferase (ptsI) from Priestia megaterium (Bacillus megaterium).